The chain runs to 271 residues: Tryptophan synthase alpha chain (271 aa).

Catalysis depends on proton acceptor residues Glu-49 and Asp-60.

It belongs to the TrpA family. Tetramer of two alpha and two beta chains.

It carries out the reaction (1S,2R)-1-C-(indol-3-yl)glycerol 3-phosphate + L-serine = D-glyceraldehyde 3-phosphate + L-tryptophan + H2O. Its pathway is amino-acid biosynthesis; L-tryptophan biosynthesis; L-tryptophan from chorismate: step 5/5. Functionally, the alpha subunit is responsible for the aldol cleavage of indoleglycerol phosphate to indole and glyceraldehyde 3-phosphate. This chain is Tryptophan synthase alpha chain, found in Nitrosococcus oceani (strain ATCC 19707 / BCRC 17464 / JCM 30415 / NCIMB 11848 / C-107).